A 181-amino-acid polypeptide reads, in one-letter code: Ferritin (181 aa).

The Ferritin-like diiron domain maps to 6–155 (RHNYHEDCEP…NLITRLKRAG (150 aa)). Fe cation contacts are provided by E23, E58, H61, E103, and Q137.

Belongs to the ferritin family. As to quaternary structure, oligomer of 12 or 24 subunits. The functional molecule is roughly spherical and contains a central cavity into which the polymeric mineral iron core is deposited. Post-translationally, the N-terminus is blocked.

Its subcellular location is the cytoplasm. It carries out the reaction 4 Fe(2+) + O2 + 4 H(+) = 4 Fe(3+) + 2 H2O. In terms of biological role, stores iron in a soluble, non-toxic, readily available form. Important for iron homeostasis. Has ferroxidase activity. Iron is taken up in the ferrous form and deposited as ferric hydroxides after oxidation. The sequence is that of Ferritin from Pacifastacus leniusculus (Signal crayfish).